Here is a 464-residue protein sequence, read N- to C-terminus: V-type ATP synthase beta chain (464 aa).

Belongs to the ATPase alpha/beta chains family.

Functionally, produces ATP from ADP in the presence of a proton gradient across the membrane. The V-type beta chain is a regulatory subunit. In Streptococcus gordonii (strain Challis / ATCC 35105 / BCRC 15272 / CH1 / DL1 / V288), this protein is V-type ATP synthase beta chain.